A 536-amino-acid polypeptide reads, in one-letter code: UDP-glucuronosyltransferase 2A2 (536 aa).

Residues 1-15 (MVSIRDFTMPKKFVQ) lie on the Cytoplasmic side of the membrane. A helical transmembrane segment spans residues 16–36 (MLVFNLTLTEVVLSGNVLIWP). Over 37 to 500 (TDGSHWLNIK…TWFQYHSLDV (464 aa)) the chain is Lumenal. N-linked (GlcNAc...) asparagine glycosylation is found at asparagine 58, asparagine 322, and asparagine 356. A helical membrane pass occupies residues 501–521 (IGFLLVCVTTAIFLVIQCCLF). Residues 522 to 536 (SCQKFGKIGKKKKRE) lie on the Cytoplasmic side of the membrane.

Belongs to the UDP-glycosyltransferase family. Mainly expressed in the nasal mucosa.

It is found in the endoplasmic reticulum membrane. The catalysed reaction is glucuronate acceptor + UDP-alpha-D-glucuronate = acceptor beta-D-glucuronoside + UDP + H(+). The enzyme catalyses 17alpha-estradiol + UDP-alpha-D-glucuronate = 17alpha-estradiol 3-O-(beta-D-glucuronate) + UDP + H(+). It catalyses the reaction 17beta-estradiol + UDP-alpha-D-glucuronate = 17beta-estradiol 3-O-(beta-D-glucuronate) + UDP + H(+). It carries out the reaction chenodeoxycholate + UDP-alpha-D-glucuronate = chenodeoxycholoyl-24-O-(beta-D-glucuronate) + UDP. The catalysed reaction is lithocholate + UDP-alpha-D-glucuronate = lithocholoyl-24-O-(beta-D-glucuronate) + UDP. The enzyme catalyses deoxycholate + UDP-alpha-D-glucuronate = deoxycholoyl-24-O-(beta-D-glucuronate) + UDP. It catalyses the reaction hyocholate + UDP-alpha-D-glucuronate = hyocholoyl-24-O-(beta-D-glucuronate) + UDP. It carries out the reaction hyodeoxycholate + UDP-alpha-D-glucuronate = hyodeoxycholate 6-O-(beta-D-glucuronate) + UDP + H(+). UDP-glucuronosyltransferase (UGT) that catalyzes phase II biotransformation reactions in which lipophilic substrates are conjugated with glucuronic acid to increase the metabolite's water solubility, thereby facilitating excretion into either the urine or bile. Essential for the elimination and detoxification of drugs, xenobiotics and endogenous compounds. Catalyzes the glucuronidation of endogenous estrogen hormone estradiol. Contributes to bile acid (BA) detoxification by catalyzing the glucuronidation of BA substrates, which are natural detergents for dietary lipids absorption. Shows a potential role in detoxification of toxic waste compounds in the amniotic fluid before birth, and air-born chemical after birth. This is UDP-glucuronosyltransferase 2A2 from Homo sapiens (Human).